We begin with the raw amino-acid sequence, 1230 residues long: MEEDAGAASPAPEPEPEVDPARELEPEAGVSESISRLWTDVMGILDGSLGNIDDLAQQYADYYNTCFSDVCERMEELRKRRVSQDLDVEKPDASPTSLQLRSQIEESLGFCSAVSTPEVERKYPLHKSNSEDGCVGKGDWKKKNKYFWQNFRKNQKGIMRQTSKGEDVGYVASEITMSDEERIQLMMMVKEKMITIEEALARLKEYEAQHRQSSTLDPADWPDGSYPTLDGSSTCNSREQSDDETEDSVKFKRLHKLVNSTRRVRKKLIRVEEMKKPSAEGGEEHVFENSPVQDERSALYSGVHKKPFFYDGSPEKPPEDDADSLTPSPSSSSLDTWGAGRKLVKTFSKGESRGLIKPPKKMGTFFSYPEEEKAQKVSRSLTEGEMKKGLGSLSHGRTCSFGGFDLTNRSLHVGSNNSDPAGKEGDFVYKEVIKSPPAPRISLGKKVRSVKETMRKRMSKKYSSPVSEQDSGLDGMPSSPASGKPDSEHVDKPKLKAGGSVESLRSSLSGQSSMSGQTVSTTDSSTSNRESVKSEDGDDEEPPYRGPFCGRARVHTDFTPSPYDTDSLKLKKGDIIDIISKPPMGTWMGLLNNKVGTFKFIYVDVLNEEEEKPKRPTRRRKKGRPSQPKSVEDLLDRINLKEHMPTFLFNGYEDLDTFKLLEEEDLDELNIRDPEHRAVLLTAVELLQEYDSNSDQSGSQEKLLVDNQGLSGRSPRDSGCYESSENLENAKTHKPSVLSTKSSTESNLKSFTRSQPGNYPTLPLMKSGEVRKQGEEGRLGRGLAPDTAKSCDVPSVTDLSKNRRSLPVSICRSCETLEGPEPVESWPRSHSLDDLQGDADVGKNVPTEMPETCSQNVPEVPQKTSACTSKALPRGRDPTADVMLLTQSKRFSDPPKTMAKKLDGSVVASNLGIAPPQCIPRDFEAQPPVKPGLTRTSLEGLRKGHDHHPLGTKEGVDGEQSAPETRTQSRHPSQPPPVPAKKSRERLANGLHLVPSPEAPILPLKKASPASPVSPSDCPSPREPRPSSGTEPGSPACTRPPPWLAELPESTSLQEHGVKLGPVLSRKVSCVRGVDLEMLTENKLQAEGIDLTEEPYSDKHGRCGIPEALVQRYAEDLEQPERDVATNMDQIRVKLLRKQHRMAIPSGGLTEICRKPLSPGCVASMSDWLISIGLPMYTSTLSDAGFSTLSQVPSLSHSCLQEAGITEERHIRKLITAARLFKLPPSPEAM.

Low complexity predominate over residues 1–10; it reads MEEDAGAASP. The disordered stretch occupies residues 1–30; that stretch reads MEEDAGAASPAPEPEPEVDPARELEPEAGV. Phosphoserine is present on residues Ser83 and Ser241. Disordered stretches follow at residues 211 to 249 and 275 to 337; these read RQSS…EDSV and KKPS…LDTW. Basic and acidic residues predominate over residues 275–297; that stretch reads KKPSAEGGEEHVFENSPVQDERS. Positions 324–336 are enriched in low complexity; sequence SLTPSPSSSSLDT. Ser400 is modified (phosphoserine). Disordered stretches follow at residues 439-566, 610-633, and 705-792; these read PRIS…YDTD, EEKP…SVED, and VDNQ…KSCD. Residues 461 to 470 are compositionally biased toward polar residues; that stretch reads KYSSPVSEQD. A compositionally biased stretch (basic and acidic residues) spans 485–494; that stretch reads PDSEHVDKPK. The span at 498-516 shows a compositional bias: low complexity; that stretch reads GGSVESLRSSLSGQSSMSG. Over residues 517-529 the composition is skewed to polar residues; sequence QTVSTTDSSTSNR. Residues 547-608 enclose the SH3 domain; that stretch reads PFCGRARVHT…KFIYVDVLNE (62 aa). Residues 615–624 are compositionally biased toward basic residues; sequence RPTRRRKKGR. One can recognise an SAM 1 domain in the interval 626–690; the sequence is SQPKSVEDLL…LTAVELLQEY (65 aa). Over residues 737–758 the composition is skewed to polar residues; sequence VLSTKSSTESNLKSFTRSQPGN. A compositionally biased stretch (basic and acidic residues) spans 768–779; it reads GEVRKQGEEGRL. A phosphoserine mark is found at Ser813 and Ser831. 2 disordered regions span residues 818–875 and 915–1045; these read EGPE…LPRG and PPQC…PWLA. The required for interaction with TRAF6 stretch occupies residues 844–852; it reads NVPTEMPET. Polar residues predominate over residues 852–868; it reads TCSQNVPEVPQKTSACT. Basic and acidic residues predominate over residues 940–956; it reads GLRKGHDHHPLGTKEGV. The span at 962–972 shows a compositional bias: polar residues; it reads APETRTQSRHP. The span at 1008-1019 shows a compositional bias: low complexity; that stretch reads SPASPVSPSDCP. The SAM 2 domain occupies 1160-1224; sequence GCVASMSDWL…ITAARLFKLP (65 aa).

Interacts with GNAS. Interacts with IQGAP1. Interacts with TRAF6 (via C-terminus); the interaction is LPS-dependent. Interacts with MAP3K7, CHUK and IKBKB. As to expression, expressed in the microvascular endothelium of various organs, as well as in parenchymal cells. Expressed in the endothelium but not lymphoid cells of spleen and thymus.

The protein localises to the cytoplasm. Functionally, is a positive regulator of NF-kappa-B signaling downstream of TLR4 activation. It acts as a scaffold molecule to assemble a molecular complex that includes TRAF6, MAP3K7, CHUK and IKBKB, thereby facilitating NF-kappa-B signaling activation. Regulates TRAF6 and MAP3K7 ubiquitination. Involved in the regulation of cell mobility. Regulates lipolysaccharide (LPS)-induced endothelial cell migration. Is involved in the regulation of skin pigmentation through the control of melanocyte migration in the epidermis. The protein is SAM and SH3 domain-containing protein 1 (Sash1) of Mus musculus (Mouse).